The chain runs to 215 residues: UPF0502 protein YceH (215 aa).

This sequence belongs to the UPF0502 family.

The polypeptide is UPF0502 protein YceH (Salmonella paratyphi C (strain RKS4594)).